A 478-amino-acid polypeptide reads, in one-letter code: PRAME family member 11 (478 aa).

Residues 99-126 (RWKLQVLDLQDVCENFWMVWSEAMAHGC) form an LRR 1; degenerate repeat. Residues 181 to 205 (HLCCKKLKILGMPFRNIRSILKMVN) form an LRR 2; degenerate repeat. An LRR 3; degenerate repeat occupies 206-232 (LDCIQEVEVNCKWILPILTQFTPYLGH). The LRR 4; degenerate repeat unit spans residues 233-268 (LRNLQKLVLSHMDVSRYVSPEQKKEIVTQFTTQFLK). 5 LRR repeats span residues 269–294 (LRCL…LSCL), 295–326 (KTSL…SQLK), 327–347 (TLDL…QILL), 351–378 (AATL…ALSR), and 379–403 (CFEL…LLSH).

The protein belongs to the PRAME family.

This Homo sapiens (Human) protein is PRAME family member 11.